A 72-amino-acid chain; its full sequence is ATP synthase subunit c (72 aa).

Helical transmembrane passes span 1–21 (MSLG…GAGI) and 48–68 (MFIG…FSFI).

This sequence belongs to the ATPase C chain family. F-type ATPases have 2 components, F(1) - the catalytic core - and F(0) - the membrane proton channel. F(1) has five subunits: alpha(3), beta(3), gamma(1), delta(1), epsilon(1). F(0) has three main subunits: a(1), b(2) and c(10-14). The alpha and beta chains form an alternating ring which encloses part of the gamma chain. F(1) is attached to F(0) by a central stalk formed by the gamma and epsilon chains, while a peripheral stalk is formed by the delta and b chains.

It localises to the cell membrane. F(1)F(0) ATP synthase produces ATP from ADP in the presence of a proton or sodium gradient. F-type ATPases consist of two structural domains, F(1) containing the extramembraneous catalytic core and F(0) containing the membrane proton channel, linked together by a central stalk and a peripheral stalk. During catalysis, ATP synthesis in the catalytic domain of F(1) is coupled via a rotary mechanism of the central stalk subunits to proton translocation. Functionally, key component of the F(0) channel; it plays a direct role in translocation across the membrane. A homomeric c-ring of between 10-14 subunits forms the central stalk rotor element with the F(1) delta and epsilon subunits. This Geobacillus kaustophilus (strain HTA426) protein is ATP synthase subunit c.